A 910-amino-acid chain; its full sequence is MVSLSIIARKLFGSARESRIKRLRQKALQISALEEHFQKLSDGELCQKTDEFRQRLTDGETIDSLLPEAFATVREAAKRVYNMRPFDVQLIGGMVLHNRGIAEMRTGEGKTLMATLPVYLNALEGKGVHVVTVNDYLANRDAETMGKIYSFLGLTTGVILHDLDTNARRAAYACDITYATNNELGFDYLRDNMTFDRSQMVQRGHHYAIIDEVDSILIDEARTPLIISGPLEDRTDFYNLVNTFIPNLTPEDYEIDEKQKTTTFTEIGTEKIEKMLEQAGHLKNDSLYDIENVAIVHHVNNALKAHKLFVRDKDYIVRNGEIVIIDEFTGRMMPGRRYSEGLHQALEAKEHVAIQPENQTLASITFQNYFRMYEKLSGMTGTATTEAEEFSNIYGLEVVEIPTNLPVQRLDEDDEIYRTTEEKYRAIVRDIRQAHEKGQPILVGTTSIEKSEQLAERLRKEGITDFKVLNARYHEQEAYIVAQAGVPGALTIATNMAGRGTDIQLGGNIEMRIRQELQDIPEGSERTAKIEKIKQDVQKLKEKSLAAGGLYVLATERHESRRIDNQLRGRSGRQGDPGRSKFFLSLQDDLMRIFGSDRMDSILQKLGLKENEAIIHPWINKALEKAQKKVEARNFEIRKNLLKYDDVMNDQRKVIFEQRMEIMNAENLTDMMIEMRNDVIEDLIETHIPSGTYSEKWNAKALQSELSQCFNLELPIEEWVKEDGIAEQQILERILDAVTKFENERTEHYSPEMMVYFHKAILLKTIDMLWREHLINLDHLRSVIGFRGYAQRDPLNEYKTEAFELFQTMLKNLRRDVVSKLMSFEIVQHPLESTMPQEMYAEHSTSRNIDKKDGILWAQMQNNTEVSDPIKRDPGDSSTWEKVGRNELCPCGSSKKYKHCHGSFIPKMDG.

ATP contacts are provided by residues Gln-89, 107-111 (GEGKT), and Asp-502. Zn(2+)-binding residues include Cys-889, Cys-891, Cys-900, and His-901.

Belongs to the SecA family. As to quaternary structure, monomer and homodimer. Part of the essential Sec protein translocation apparatus which comprises SecA, SecYEG and auxiliary proteins SecDF-YajC and YidC. Zn(2+) is required as a cofactor.

The protein resides in the cell inner membrane. It localises to the cytoplasm. The catalysed reaction is ATP + H2O + cellular proteinSide 1 = ADP + phosphate + cellular proteinSide 2.. Functionally, part of the Sec protein translocase complex. Interacts with the SecYEG preprotein conducting channel. Has a central role in coupling the hydrolysis of ATP to the transfer of proteins into and across the cell membrane, serving both as a receptor for the preprotein-SecB complex and as an ATP-driven molecular motor driving the stepwise translocation of polypeptide chains across the membrane. The protein is Protein translocase subunit SecA of Bartonella bacilliformis (strain ATCC 35685 / KC583 / Herrer 020/F12,63).